The sequence spans 163 residues: Bursicon (163 aa).

The first 23 residues, 1 to 23 (MKSSVCVLLKVLACILLPGGLNA), serve as a signal peptide directing secretion. 5 disulfide bridges follow: C39-C88, C53-C102, C63-C123, C67-C125, and C85-C128. Residues 39 to 129 (CQVTPVIHVL…PLECMCRPCT (91 aa)) enclose the CTCK domain.

Heterodimer of burs and pburs.

Its subcellular location is the secreted. Its function is as follows. Final heterodimeric neurohormone released at the end of the molting cycle, involved in the sclerotization (tanning) of the insect cuticle, melanization and wing spreading. This is Bursicon from Aedes aegypti (Yellowfever mosquito).